The following is a 273-amino-acid chain: Mitochondrial distribution and morphology protein 12 (273 aa).

Residues Met-1–Tyr-260 enclose the SMP-LTD domain. Positions Met-76 to Arg-98 are disordered. The segment covering Ala-78 to Tyr-90 has biased composition (acidic residues).

This sequence belongs to the MDM12 family. In terms of assembly, component of the ER-mitochondria encounter structure (ERMES) or MDM complex, composed of MMM1, MDM10, MDM12 and MDM34. An MMM1 homodimer associates with one molecule of MDM12 on each side in a pairwise head-to-tail manner, and the SMP-LTD domains of MMM1 and MDM12 generate a continuous hydrophobic tunnel for phospholipid trafficking.

It localises to the mitochondrion outer membrane. It is found in the endoplasmic reticulum membrane. Functionally, component of the ERMES/MDM complex, which serves as a molecular tether to connect the endoplasmic reticulum (ER) and mitochondria. Components of this complex are involved in the control of mitochondrial shape and protein biogenesis, and function in nonvesicular lipid trafficking between the ER and mitochondria. MDM12 is required for the interaction of the ER-resident membrane protein MMM1 and the outer mitochondrial membrane-resident beta-barrel protein MDM10. The MDM12-MMM1 subcomplex functions in the major beta-barrel assembly pathway that is responsible for biogenesis of all mitochondrial outer membrane beta-barrel proteins, and acts in a late step after the SAM complex. The MDM10-MDM12-MMM1 subcomplex further acts in the TOM40-specific pathway after the action of the MDM12-MMM1 complex. Essential for establishing and maintaining the structure of mitochondria and maintenance of mtDNA nucleoids. In Vanderwaltozyma polyspora (strain ATCC 22028 / DSM 70294 / BCRC 21397 / CBS 2163 / NBRC 10782 / NRRL Y-8283 / UCD 57-17) (Kluyveromyces polysporus), this protein is Mitochondrial distribution and morphology protein 12.